The following is a 195-amino-acid chain: Pyruvoyl-dependent arginine decarboxylase AaxB (195 aa).

Serine 53 bears the Pyruvic acid (Ser) mark.

The protein belongs to the pyruvoyl-dependent arginine decarboxylase family. As to quaternary structure, trimer of an alpha-beta dimer. The cofactor is pyruvate.

The protein localises to the cytoplasm. It carries out the reaction L-arginine + H(+) = agmatine + CO2. Functionally, part of the AaxABC system, catalyzes the decarboxylation of L-arginine. The arginine uptake by the bacterium in the macrophage may be a virulence factor against the host innate immune response. This chain is Pyruvoyl-dependent arginine decarboxylase AaxB (aaxB), found in Chlamydia abortus (strain DSM 27085 / S26/3) (Chlamydophila abortus).